The chain runs to 518 residues: Pumilio homolog 14 (518 aa).

2 disordered regions span residues 26-46 and 77-114; these read TMAS…QPEN and VGQN…PPMG. Residues 29–44 are compositionally biased toward low complexity; that stretch reads SSSSQPQPISSPFHQP. The 341-residue stretch at 178-518 folds into the PUM-HD domain; the sequence is YTNRFGYEGY…GNKVLEKLNI (341 aa). Residues 206–235 form a Pumilio 1; degenerate repeat; that stretch reads SAFAKDKEMSERLGMSIFQGTKETVDAIYN. Pumilio repeat units follow at residues 236–271, 275–313, 314–348, 349–387, 388–423, 424–459, and 460–494; these read GLIG…QLVD, QQMF…RIVD, VVRT…LLLE, LIVQ…RLIM, EAIA…ALVR, QLIG…IVID, and LLRE…MLRY.

It localises to the cytoplasm. Its subcellular location is the nucleus. Sequence-specific RNA-binding protein that regulates translation and mRNA stability by binding the 3'-UTR of target mRNAs. The polypeptide is Pumilio homolog 14 (APUM14) (Arabidopsis thaliana (Mouse-ear cress)).